The primary structure comprises 277 residues: Shikimate dehydrogenase (NADP(+)) (277 aa).

Shikimate is bound by residues 15-17 (SKS) and Thr62. Lys66 (proton acceptor) is an active-site residue. Position 78 (Glu78) interacts with NADP(+). Shikimate-binding residues include Asn87 and Asp103. NADP(+) contacts are provided by residues 127–131 (GAGGA), 151–156 (NRTHEK), and Gly238.

Belongs to the shikimate dehydrogenase family. In terms of assembly, homodimer.

It catalyses the reaction shikimate + NADP(+) = 3-dehydroshikimate + NADPH + H(+). It functions in the pathway metabolic intermediate biosynthesis; chorismate biosynthesis; chorismate from D-erythrose 4-phosphate and phosphoenolpyruvate: step 4/7. Its function is as follows. Involved in the biosynthesis of the chorismate, which leads to the biosynthesis of aromatic amino acids. Catalyzes the reversible NADPH linked reduction of 3-dehydroshikimate (DHSA) to yield shikimate (SA). The chain is Shikimate dehydrogenase (NADP(+)) from Shewanella frigidimarina (strain NCIMB 400).